The following is an 83-amino-acid chain: Large ribosomal subunit protein eL43 (83 aa).

Residues Cys-38, Cys-41, Cys-56, and Cys-59 each coordinate Zn(2+). Residues 38–59 (CPVCGRRAVKRISTGIWQCTKC) form a C4-type zinc finger.

This sequence belongs to the eukaryotic ribosomal protein eL43 family. Putative zinc-binding subfamily. Part of the 50S ribosomal subunit. Zn(2+) serves as cofactor.

Functionally, binds to the 23S rRNA. The sequence is that of Large ribosomal subunit protein eL43 from Pyrococcus horikoshii (strain ATCC 700860 / DSM 12428 / JCM 9974 / NBRC 100139 / OT-3).